The sequence spans 155 residues: RNA pyrophosphohydrolase (155 aa).

The Nudix hydrolase domain maps to 6 to 148 (GYRANVAIVL…KQDVYRRALT (143 aa)). Residues 38–59 (GGVATGETPLQAMYRELYEEVG) carry the Nudix box motif.

The protein belongs to the Nudix hydrolase family. RppH subfamily. Requires a divalent metal cation as cofactor.

In terms of biological role, accelerates the degradation of transcripts by removing pyrophosphate from the 5'-end of triphosphorylated RNA, leading to a more labile monophosphorylated state that can stimulate subsequent ribonuclease cleavage. The protein is RNA pyrophosphohydrolase of Francisella philomiragia subsp. philomiragia (strain ATCC 25017 / CCUG 19701 / FSC 153 / O#319-036).